Reading from the N-terminus, the 771-residue chain is Semaphorin-3A (771 aa).

The first 20 residues, 1–20 (MGWLTRIVCLFWGVLLTARA), serve as a signal peptide directing secretion. The Sema domain occupies 31-514 (RLKLSYKEML…STAGVAQLPL (484 aa)). The N-linked (GlcNAc...) asparagine glycan is linked to N53. The cysteines at positions 103 and 114 are disulfide-linked. N-linked (GlcNAc...) asparagine glycosylation occurs at N125. Intrachain disulfides connect C132–C141, C269–C381, C293–C341, and C517–C535. The Ig-like C2-type domain maps to 580–664 (PEERIIYGVE…GFIQTLLKVT (85 aa)). N-linked (GlcNAc...) asparagine glycosylation occurs at N590. A disulfide bond links C649 and C722. Residues 728-737 (RDRKQRRQRP) show a composition bias toward basic residues. Residues 728 to 771 (RDRKQRRQRPGHTPGNSNKWKHLQENKKGRNRRTHEFERAPRSV) are disordered. Basic and acidic residues predominate over residues 749-771 (HLQENKKGRNRRTHEFERAPRSV).

Belongs to the semaphorin family. In terms of assembly, interacts with PLXND1. As to expression, expressed in the dorsal root ganglia.

The protein resides in the secreted. In terms of biological role, involved in the development of the olfactory system and in neuronal control of puberty. Induces the collapse and paralysis of neuronal growth cones. Could serve as a ligand that guides specific growth cones by a motility-inhibiting mechanism. Binds to the complex neuropilin-1/plexin-1. This chain is Semaphorin-3A (SEMA3A), found in Homo sapiens (Human).